Here is a 350-residue protein sequence, read N- to C-terminus: UDP-N-acetylenolpyruvoylglucosamine reductase (350 aa).

Residues 24-195 (HVEATARWLL…VAVEFNLPLL (172 aa)) enclose the FAD-binding PCMH-type domain. Arginine 172 is a catalytic residue. The active-site Proton donor is serine 245. Glutamate 342 is an active-site residue.

Belongs to the MurB family. FAD serves as cofactor.

It localises to the cytoplasm. The catalysed reaction is UDP-N-acetyl-alpha-D-muramate + NADP(+) = UDP-N-acetyl-3-O-(1-carboxyvinyl)-alpha-D-glucosamine + NADPH + H(+). It functions in the pathway cell wall biogenesis; peptidoglycan biosynthesis. Its function is as follows. Cell wall formation. This chain is UDP-N-acetylenolpyruvoylglucosamine reductase, found in Xanthomonas oryzae pv. oryzae (strain MAFF 311018).